The following is a 444-amino-acid chain: Xylose isomerase (444 aa).

Active-site residues include His-101 and Asp-104. Mg(2+)-binding residues include Glu-232, Glu-268, His-271, Asp-296, Asp-307, Asp-309, and Asp-339.

The protein belongs to the xylose isomerase family. As to quaternary structure, homotetramer. The cofactor is Mg(2+).

The protein resides in the cytoplasm. The catalysed reaction is alpha-D-xylose = alpha-D-xylulofuranose. The polypeptide is Xylose isomerase (Thermotoga petrophila (strain ATCC BAA-488 / DSM 13995 / JCM 10881 / RKU-1)).